Reading from the N-terminus, the 380-residue chain is SAM and SH3 domain-containing protein 3 (380 aa).

A disordered region spans residues 1–76 (MLRRKPSNAS…KSGKKLGKKW (76 aa)). A compositionally biased stretch (low complexity) spans 22–41 (LQRSSSFKDFAKSKPSSPVV). Residues Ser-27, Ser-34, and Ser-42 each carry the phosphoserine modification. Thr-61 carries the phosphothreonine modification. Phosphoserine is present on Ser-97. Disordered stretches follow at residues 98-174 (EEMA…TGPF), 237-256 (VGHA…KPKT), and 318-380 (TGSE…AGAP). Thr-103 is modified (phosphothreonine). Ser-110 bears the Phosphoserine mark. Thr-112 bears the Phosphothreonine mark. Ser-113 carries the post-translational modification Phosphoserine. Tyr-116 carries the post-translational modification Phosphotyrosine. Ser-120 is subject to Phosphoserine. Positions 143 to 152 (RQASTGSELC) are enriched in polar residues. The span at 153–164 (SPSPGSGSFGEE) shows a compositional bias: low complexity. The 62-residue stretch at 173 to 234 (PFCGRARVHT…KFIYVDVLPE (62 aa)) folds into the SH3 domain. A compositionally biased stretch (basic residues) spans 241–255 (RPSRRQSKGKRPKPK). An SAM domain is found at 252-316 (PKPKTLHELL…LTAAELLLDY (65 aa)). Thr-318 bears the Phosphothreonine mark. A compositionally biased stretch (acidic residues) spans 318-327 (TGSEEAEEGA). Ser-320 carries the phosphoserine modification.

Functionally, may function as a signaling adapter protein in lymphocytes. The sequence is that of SAM and SH3 domain-containing protein 3 (SASH3) from Homo sapiens (Human).